Consider the following 204-residue polypeptide: Lymphotoxin-alpha (204 aa).

The first 33 residues, M1–G33, serve as a signal peptide directing secretion. In terms of domain architecture, THD spans P62–L204. N-linked (GlcNAc...) asparagine glycosylation occurs at N95. A disulfide bridge connects residues C119 and C155.

The protein belongs to the tumor necrosis factor family. As to quaternary structure, homotrimer, and heterotrimer of either two LTB and one LTA subunits or (less prevalent) two LTA and one LTB subunits. Interacts with TNFRSF14.

The protein localises to the secreted. It is found in the membrane. Its function is as follows. Cytokine that in its homotrimeric form binds to TNFRSF1A/TNFR1, TNFRSF1B/TNFBR and TNFRSF14/HVEM. In its heterotrimeric form with LTB binds to TNFRSF3/LTBR. Lymphotoxin is produced by lymphocytes and is cytotoxic for a wide range of tumor cells in vitro and in vivo. In Sus scrofa (Pig), this protein is Lymphotoxin-alpha (LTA).